The following is a 352-amino-acid chain: Phosphoribosylformylglycinamidine cyclo-ligase (352 aa).

It belongs to the AIR synthase family.

It localises to the cytoplasm. The catalysed reaction is 2-formamido-N(1)-(5-O-phospho-beta-D-ribosyl)acetamidine + ATP = 5-amino-1-(5-phospho-beta-D-ribosyl)imidazole + ADP + phosphate + H(+). It functions in the pathway purine metabolism; IMP biosynthesis via de novo pathway; 5-amino-1-(5-phospho-D-ribosyl)imidazole from N(2)-formyl-N(1)-(5-phospho-D-ribosyl)glycinamide: step 2/2. The sequence is that of Phosphoribosylformylglycinamidine cyclo-ligase from Saccharophagus degradans (strain 2-40 / ATCC 43961 / DSM 17024).